Here is a 718-residue protein sequence, read N- to C-terminus: Mitochondrial potassium channel ATP-binding subunit (718 aa).

A mitochondrion-targeting transit peptide spans 1–25; that stretch reads MLVHLFRVGIRGGPFPGRLLPPLRF. The next 3 helical transmembrane spans lie at 128–148, 179–199, and 279–299; these read LLVLGVAVVLALGAALVNVQI, THLLILYGVQGLLTFGYLVLL, and LLLMLATPALMGVGTLMGSGL. The 288-residue stretch at 133-420 folds into the ABC transmembrane type-1 domain; sequence VAVVLALGAA…LSVLFGQVVR (288 aa). Positions 455 to 692 constitute an ABC transporter domain; it reads VTFQNVCFSY…GGLYAELIRR (238 aa). 490–497 is an ATP binding site; it reads GQSGGGKT. A disordered region spans residues 697 to 718; it reads APRTAAPLPKKPEGPRNHQHKS.

This sequence belongs to the ABC transporter superfamily. ABCB family. Multidrug resistance exporter (TC 3.A.1.201) subfamily. As to quaternary structure, the mitochondrial potassium channel (mitoK(ATP)) is composed of 4 subunits of CCDC51/MITOK and 4 subunits of ABCB8/MITOSUR. Physically interacts with PAAT. Interacts with Neuropilin-1 (NRP1) in mitochondria.

Its subcellular location is the mitochondrion inner membrane. Its activity is regulated as follows. Channel activity inhibited by ATP via ABCB8/MITOSUR subunit. Its function is as follows. ATP-binding subunit of the mitochondrial ATP-gated potassium channel (mitoK(ATP)). Together with pore-forming subunit CCDC51/MITOK of the mitoK(ATP) channel, mediates ATP-dependent potassium currents across the mitochondrial inner membrane. An increase in ATP intracellular levels closes the channel, inhibiting K(+) transport, whereas a decrease in ATP levels enhances K(+) uptake in the mitochondrial matrix. Plays a role in mitochondrial iron transport. Required for maintenance of normal cardiac function, possibly by influencing mitochondrial iron export and regulating the maturation of cytosolic iron sulfur cluster-containing enzymes. The sequence is that of Mitochondrial potassium channel ATP-binding subunit (ABCB8) from Pongo abelii (Sumatran orangutan).